The chain runs to 257 residues: Imidazole glycerol phosphate synthase subunit HisF (257 aa).

Residues D11 and D130 contribute to the active site.

This sequence belongs to the HisA/HisF family. In terms of assembly, heterodimer of HisH and HisF.

It is found in the cytoplasm. The catalysed reaction is 5-[(5-phospho-1-deoxy-D-ribulos-1-ylimino)methylamino]-1-(5-phospho-beta-D-ribosyl)imidazole-4-carboxamide + L-glutamine = D-erythro-1-(imidazol-4-yl)glycerol 3-phosphate + 5-amino-1-(5-phospho-beta-D-ribosyl)imidazole-4-carboxamide + L-glutamate + H(+). It functions in the pathway amino-acid biosynthesis; L-histidine biosynthesis; L-histidine from 5-phospho-alpha-D-ribose 1-diphosphate: step 5/9. Functionally, IGPS catalyzes the conversion of PRFAR and glutamine to IGP, AICAR and glutamate. The HisF subunit catalyzes the cyclization activity that produces IGP and AICAR from PRFAR using the ammonia provided by the HisH subunit. The polypeptide is Imidazole glycerol phosphate synthase subunit HisF (Shewanella sediminis (strain HAW-EB3)).